Consider the following 159-residue polypeptide: MADPGIVMVGIGDCAIARCPVKIKTSGLGSCVGVTIYDRHEKIGGLLHTMLPNIKKAGIKDNPTKFTDAGIEYLVAEIIENGGSRRKLEAKLVGGSSMFENSHMNIGERNIKSAKETLKKLGLEIIAEDTGKNYGRTIIFDTLTGDLLIKTMLRGDKVI.

Belongs to the CheD family.

It carries out the reaction L-glutaminyl-[protein] + H2O = L-glutamyl-[protein] + NH4(+). Functionally, probably deamidates glutamine residues to glutamate on methyl-accepting chemotaxis receptors (MCPs), playing an important role in chemotaxis. In Methanosarcina acetivorans (strain ATCC 35395 / DSM 2834 / JCM 12185 / C2A), this protein is Probable chemoreceptor glutamine deamidase CheD 1.